Here is a 436-residue protein sequence, read N- to C-terminus: Chaperone SurA (436 aa).

The N-terminal stretch at 1–30 is a signal peptide; sequence MKFFQRPERRLKQWGLALLLAASALLPARA. PpiC domains lie at 180 to 281 and 291 to 389; these read ETEY…KLVD and VTQT…QVLE.

The protein localises to the periplasm. The catalysed reaction is [protein]-peptidylproline (omega=180) = [protein]-peptidylproline (omega=0). In terms of biological role, chaperone involved in the correct folding and assembly of outer membrane proteins. Recognizes specific patterns of aromatic residues and the orientation of their side chains, which are found more frequently in integral outer membrane proteins. May act in both early periplasmic and late outer membrane-associated steps of protein maturation. The chain is Chaperone SurA from Thiobacillus denitrificans (strain ATCC 25259 / T1).